A 292-amino-acid polypeptide reads, in one-letter code: 33 kDa chaperonin (292 aa).

2 disulfides stabilise this stretch: Cys230–Cys232 and Cys263–Cys266.

The protein belongs to the HSP33 family. Post-translationally, under oxidizing conditions two disulfide bonds are formed involving the reactive cysteines. Under reducing conditions zinc is bound to the reactive cysteines and the protein is inactive.

The protein resides in the cytoplasm. Functionally, redox regulated molecular chaperone. Protects both thermally unfolding and oxidatively damaged proteins from irreversible aggregation. Plays an important role in the bacterial defense system toward oxidative stress. In Salmonella paratyphi A (strain ATCC 9150 / SARB42), this protein is 33 kDa chaperonin.